The following is a 329-amino-acid chain: Bifunctional muramidase/DL-endopeptidase CwlT (329 aa).

The signal sequence occupies residues 1–29 (MISKKVVLPLVFSAPFIFFFVLCIVVVMT). A muramidase region spans residues 59–192 (RFRAVFEKYA…SYVDHVMRYV (134 aa)). One can recognise a NlpC/P60 domain in the interval 206–329 (MDFYETVMKE…DHLVSFGRIK (124 aa)). The active-site Nucleophile is cysteine 237. The active-site Proton acceptor is the histidine 290. Asparagine 302 is a catalytic residue.

The protein belongs to the peptidase C40 family.

It is found in the secreted. The catalysed reaction is Hydrolysis of (1-&gt;4)-beta-linkages between N-acetylmuramic acid and N-acetyl-D-glucosamine residues in a peptidoglycan and between N-acetyl-D-glucosamine residues in chitodextrins.. Exhibits both muramidase and DL-endopeptidase activities. The N-terminal region acts as a N-acetylmuramidase, which cleaves the bond between N-acetylmuramic acid and N-acetyl-D-glucosamine (MurNAc-GlcNAc) in peptidoglycan. The C-terminal region acts as a DL-endopeptidase that cleaves the bond between D-gamma-glutamate and meso-diaminopimelic acid. Cannot degrade purified B.anthracis peptidoglycan, which differ from those of B.subtilis. CwlT is required for ICEBs1 conjugation: the muramidase activity is essential, whereas the peptidase activity is partially dispensable for transfer of ICEBs1. The chain is Bifunctional muramidase/DL-endopeptidase CwlT from Bacillus subtilis (strain 168).